The chain runs to 547 residues: Cytochrome P450 monooxygenase cpsD (547 aa).

The helical transmembrane segment at Leu-18–Leu-38 threads the bilayer. Cys-476 provides a ligand contact to heme. The disordered stretch occupies residues Arg-528–Glu-547. Residues Arg-534–Glu-547 show a composition bias toward basic and acidic residues.

The protein belongs to the cytochrome P450 family. It depends on heme as a cofactor.

Its subcellular location is the membrane. The catalysed reaction is campesine B + campesine C + reduced [NADPH--hemoprotein reductase] + O2 = campesine D + oxidized [NADPH--hemoprotein reductase] + 2 H2O + 2 H(+). It catalyses the reaction 2 campesine B + reduced [NADPH--hemoprotein reductase] + O2 = campesine F + oxidized [NADPH--hemoprotein reductase] + 2 H2O + H(+). It carries out the reaction campesine C + campesine A + reduced [NADPH--hemoprotein reductase] + O2 = campesine E + oxidized [NADPH--hemoprotein reductase] + 2 H2O + 2 H(+). It participates in alkaloid biosynthesis. Its function is as follows. Cytochrome P450 monooxygenase; part of the gene cluster that mediates the biosynthesis of campesine G, a dimeric indole piperazine alkaloid that shows good insecticidal activity Galleria mellonella. Within the pathway, cpsD acts as a dimerase that simultaneously catalyzes one C-C bond (C3-C3') and two C-N bonds (C2-N16' and C2'-N16) coupling reactions between campesines B and C to produce a heterodimer with unexpected 6/5/6/6/6/6/5/6 eight-ring scaffold called campesine D. CpsD is also able to catalyze oxidative heterocoupling od campesines A with B to produce campesine F and campesines A with C to produce campesine E. The non-canonical non-ribosomal peptide synthetase cpsA catalyzes the first steps of the pathway by producing L-tryptophanal and L-valinal from their respective amino-acids. These products condensate spontaneously to form trypyl-valyl pyrazine also known as didehydrocampesine A. The NmrA-like family domain-containing oxidoreductase cpsB is the next enzyme in cps pathway and reduces the unstable didehydrocampesine A to campesine A. The methyltransferase cpsF and the acetyltransferase cpsE both recognize N13 of piperazine ring to carry out methylation and acetylation of campesine A to produce campesine C and B, respectively. The cytochrome P450 monooxygenase cpsD then acts as a dimerase that catalyzes oxidative heterocoupling between campesine B and C to produce heterodimers with unexpected 6/5/6/6/6/6/5/6 eight-ring scaffold called campesine D. Finally,the cytochrome P450 monooxygenase cpsC is a regioselective dehydrogenase that catalyzes dehydrogenation reaction towards C2-N1 to produce campesine G. The protein is Cytochrome P450 monooxygenase cpsD of Aspergillus campestris (strain IBT 28561).